Here is a 601-residue protein sequence, read N- to C-terminus: Glutathione-regulated potassium-efflux system protein KefB (601 aa).

13 helical membrane passes run 4–24 (ADLL…VPLA), 29–49 (IGAV…GLGF), 55–75 (EILH…GLEL), 87–107 (IFGV…GLLM), 111–131 (FLWQ…TAMA), 152–172 (VLLF…LLAG), 177–197 (HFDW…LIGG), 207–227 (FIAA…LVLS), 230–250 (LFMD…GVLL), 262–282 (AIDP…GMSL), 284–304 (LGVL…LVVI), 324–344 (MQFA…FSTA), and 356–376 (ALLL…MKGI). Residues 400 to 519 (KPQVIVVGFG…AGVTQFSRET (120 aa)) form the RCK N-terminal domain.

This sequence belongs to the monovalent cation:proton antiporter 2 (CPA2) transporter (TC 2.A.37) family. KefB subfamily. In terms of assembly, interacts with the regulatory subunit KefG.

Its subcellular location is the cell inner membrane. Pore-forming subunit of a potassium efflux system that confers protection against electrophiles. Catalyzes K(+)/H(+) antiport. In Salmonella newport (strain SL254), this protein is Glutathione-regulated potassium-efflux system protein KefB.